The following is a 217-amino-acid chain: Pyrophosphatase PpaX (217 aa).

The active-site Nucleophile is aspartate 11.

It belongs to the HAD-like hydrolase superfamily. PpaX family. Mg(2+) serves as cofactor.

The catalysed reaction is diphosphate + H2O = 2 phosphate + H(+). Hydrolyzes pyrophosphate formed during P-Ser-HPr dephosphorylation by HPrK/P. Might play a role in controlling the intracellular pyrophosphate pool. The chain is Pyrophosphatase PpaX from Listeria innocua serovar 6a (strain ATCC BAA-680 / CLIP 11262).